Reading from the N-terminus, the 788-residue chain is Endonuclease MutS2 (788 aa).

Gly334–Thr341 contacts ATP. The region spanning Leu713 to Gln788 is the Smr domain.

This sequence belongs to the DNA mismatch repair MutS family. MutS2 subfamily. As to quaternary structure, homodimer. Binds to stalled ribosomes, contacting rRNA.

Functionally, endonuclease that is involved in the suppression of homologous recombination and thus may have a key role in the control of bacterial genetic diversity. Acts as a ribosome collision sensor, splitting the ribosome into its 2 subunits. Detects stalled/collided 70S ribosomes which it binds and splits by an ATP-hydrolysis driven conformational change. Acts upstream of the ribosome quality control system (RQC), a ribosome-associated complex that mediates the extraction of incompletely synthesized nascent chains from stalled ribosomes and their subsequent degradation. Probably generates substrates for RQC. This Enterococcus faecalis (strain ATCC 700802 / V583) protein is Endonuclease MutS2.